The primary structure comprises 154 residues: Endoribonuclease YbeY (154 aa).

H114, H118, and H124 together coordinate Zn(2+).

It belongs to the endoribonuclease YbeY family. Zn(2+) serves as cofactor.

Its subcellular location is the cytoplasm. In terms of biological role, single strand-specific metallo-endoribonuclease involved in late-stage 70S ribosome quality control and in maturation of the 3' terminus of the 16S rRNA. This Haemophilus influenzae (strain PittEE) protein is Endoribonuclease YbeY.